We begin with the raw amino-acid sequence, 127 residues long: Large ribosomal subunit protein bL19 (127 aa).

Belongs to the bacterial ribosomal protein bL19 family.

Its function is as follows. This protein is located at the 30S-50S ribosomal subunit interface and may play a role in the structure and function of the aminoacyl-tRNA binding site. This Cupriavidus pinatubonensis (strain JMP 134 / LMG 1197) (Cupriavidus necator (strain JMP 134)) protein is Large ribosomal subunit protein bL19.